Reading from the N-terminus, the 461-residue chain is Zinc transporter 6 (461 aa).

At 1-33 (MGTIHLFRKPQRSFFGKLLQEFRLVAADRRSWK) the chain is on the cytoplasmic side. The chain crosses the membrane as a helical span at residues 34 to 54 (ILLFGAINLTCTGFLLMWCSS). The Extracellular segment spans residues 55-64 (TNSIALTAYT). Residues 65 to 85 (YLTIFDLFSLITCLVSYWVMM) traverse the membrane as a helical segment. The Cytoplasmic segment spans residues 86–98 (RKPSPAYSFGFER). A helical transmembrane segment spans residues 99 to 119 (LEVLAVFASTVLAQLGALFIL). Residues 120–134 (KESAERFLEQPEIHT) are Extracellular-facing. The chain crosses the membrane as a helical span at residues 135–155 (GRLLVGTFVALSFNLFTMLSI). Over 156-200 (RNKPFAYVSEAASTSWLQEHVADLSRSLCGIIPGLSSIFLPRMNP) the chain is Cytoplasmic. Residues 201-221 (FVLIDLAGAFALCITYMLIEI) traverse the membrane as a helical segment. Over 222–223 (NN) the chain is Extracellular. Residues 224 to 244 (YFAVDTASAIAIALMTFGTMY) form a helical membrane-spanning segment. The Cytoplasmic portion of the chain corresponds to 245 to 461 (PMSVYSGKVL…TNNRIGQPRP (217 aa)). The tract at residues 362–393 (PPLKGTDDSNPVTSTPTKPSSPPPEFSFNTPG) is disordered. The segment covering 370–379 (SNPVTSTPTK) has biased composition (low complexity).

The protein belongs to the cation diffusion facilitator (CDF) transporter (TC 2.A.4) family. SLC30A subfamily. As to quaternary structure, heterodimer with SLC30A5; form a functional zinc ion transmembrane transporter.

The protein localises to the golgi apparatus. Its subcellular location is the trans-Golgi network membrane. In terms of biological role, has probably no intrinsic transporter activity but together with SLC30A5 forms a functional zinc ion:proton antiporter heterodimer, mediating zinc entry into the lumen of organelles along the secretory pathway. As part of that zinc ion:proton antiporter, contributes to zinc ion homeostasis within the early secretory pathway and regulates the activation and folding of enzymes like alkaline phosphatases and enzymes involved in phosphatidylinositol glycan anchor biosynthesis. This chain is Zinc transporter 6 (SLC30A6), found in Bos taurus (Bovine).